We begin with the raw amino-acid sequence, 592 residues long: A-type ATP synthase subunit A (592 aa).

G233–T240 is an ATP binding site.

This sequence belongs to the ATPase alpha/beta chains family. Has multiple subunits with at least A(3), B(3), C, D, E, F, H, I and proteolipid K(x).

It is found in the cell membrane. The enzyme catalyses ATP + H2O + 4 H(+)(in) = ADP + phosphate + 5 H(+)(out). Component of the A-type ATP synthase that produces ATP from ADP in the presence of a proton gradient across the membrane. The A chain is the catalytic subunit. This is A-type ATP synthase subunit A from Saccharolobus islandicus (strain L.S.2.15 / Lassen #1) (Sulfolobus islandicus).